We begin with the raw amino-acid sequence, 183 residues long: Gamma-crystallin N (183 aa).

4 Beta/gamma crystallin 'Greek key' domains span residues 6–46 (GKIT…RVES), 47–89 (GAWV…RPVG), 95–136 (FRID…KVYG), and 138–180 (GAWV…RRVL).

The protein belongs to the beta/gamma-crystallin family. In terms of assembly, monomer. In terms of tissue distribution, detected in the auditory hindbrain where it is highly expressed in the medial nucleus of the trapezoid body, but also present in other nuclei of the superior olivary complex.

Its function is as follows. Crystallins are the dominant structural components of the vertebrate eye lens. Also plays an important role for integrity and function of auditory nuclei. In Rattus norvegicus (Rat), this protein is Gamma-crystallin N.